The primary structure comprises 1094 residues: Potassium-transporting ATPase alpha chain 2 (1094 aa).

Positions 1–21 (MAGGAHRADRATGEERKEGGG) are enriched in basic and acidic residues. Positions 1–37 (MAGGAHRADRATGEERKEGGGRWRAPHSPSPPGPRGC) are disordered. The segment covering 28 to 37 (SPSPPGPRGC) has biased composition (pro residues). At 56-157 (RYCTLLLFQR…NALTPPKQTP (102 aa)) the chain is on the cytoplasmic side. The chain crosses the membrane as a helical span at residues 158-178 (EIIKFLKQMVGGFSILLWVGA). Topologically, residues 179–201 (VLCWIAFGIQYVSNPSASLDRVY) are lumenal. The helical transmembrane segment at 202–222 (LGTVLAVVVILTGIFAYYQEA) threads the bilayer. Over 223 to 358 (KSTNIMASFC…NEKTPIAIEI (136 aa)) the chain is Cytoplasmic. The tract at residues 286 to 305 (SSLTGESEPQSRSSGFTHEN) is disordered. The chain crosses the membrane as a helical span at residues 359–378 (EHFVHIVAGVAVSVGILFFI). Topologically, residues 379–390 (IAVCMKYHVLDA) are lumenal. Residues 391–408 (IIFLIAIIVANVPEGLLA) traverse the membrane as a helical segment. At 409–842 (TVTVALSLTA…EEGRLIFDNL (434 aa)) the chain is on the cytoplasmic side. Asp-446 serves as the catalytic 4-aspartylphosphate intermediate. Mg(2+) is bound by residues Asp-787 and Asp-791. A helical transmembrane segment spans residues 843 to 862 (KKTIAYTLTKNIAELCPFLI). Over 863-872 (YIILGLPLPI) the chain is Lumenal. A helical membrane pass occupies residues 873 to 893 (GTITLLFIDLGTDIIPSIALA). At 894-913 (YEKAESDIMNRKPRHKKKDR) the chain is on the cytoplasmic side. Residues 914-936 (LVNQQLAVYSYLHIGLMQALGAF) traverse the membrane as a helical segment. Over 937 to 988 (LVYFTVYAQQGFRPTSLFHLRIAWDSDHLNDLEDNYGQEWTSYQRQYLEWTG) the chain is Lumenal. Residues 989-1008 (YTAFFVGIMVQQIADLIIRK) form a helical membrane-spanning segment. The Cytoplasmic segment spans residues 1009-1022 (TRKNSIFKQGLFRN). Ser-1013 is modified (phosphoserine; by PKA). A helical membrane pass occupies residues 1023–1041 (KVIWVGIASQIIVALLLSY). Over 1042 to 1056 (GLGSITALNFTMLKA) the chain is Lumenal. A helical membrane pass occupies residues 1057 to 1077 (QYWFVAVPHAILIWVYDEMRK). Topologically, residues 1078 to 1094 (LFIRLYPGSWWDKNMYY) are cytoplasmic.

It belongs to the cation transport ATPase (P-type) (TC 3.A.3) family. Type IIC subfamily. As to quaternary structure, the X(+)/K(+) ATPase pump is composed of a catalytic alpha subunit and an auxiliary non-catalytic beta subunit. The alpha subunit pairs with the beta subunit of gastric H(+)/K(+) ATPase ATP4B or the beta subunit of Na(+)/K(+) ATPases ATP1B1 and ATP1B3; this interaction is required for the formation of a functionally active pump and its targeting at the plasma membrane. Found in the skin, kidney, distal colon and brain. In the kidney it is found in the connecting tubule, cortical collecting duct and outer medullary collecting duct while in the brain it is specific to choroid plexus and cortex.

The protein localises to the apical cell membrane. It catalyses the reaction K(+)(out) + ATP + H2O + H(+)(in) = K(+)(in) + ADP + phosphate + 2 H(+)(out). The catalysed reaction is K(+)(out) + Na(+)(in) + ATP + H2O = K(+)(in) + Na(+)(out) + ADP + phosphate + H(+). Functionally, the catalytic subunit of a H(+)/K(+) ATPase and/or Na(+)/K(+) ATPase pump which transports K(+) ions in exchange for Na(+) and/or H(+) ions across the apical membrane of epithelial cells. Uses ATP as an energy source to pump K(+) ions into the cell while transporting Na(+) and/or H(+) ions to the extracellular compartment. Involved in the maintenance of electrolyte homeostasis through K(+) ion absorption in kidney and colon. In the airway epithelium, may play a primary role in mucus acidification regulating its viscosity and clearance. In Oryctolagus cuniculus (Rabbit), this protein is Potassium-transporting ATPase alpha chain 2 (ATP12A).